The following is a 264-amino-acid chain: Thymidylate synthase (264 aa).

Arg21 is a binding site for dUMP. His51 provides a ligand contact to (6R)-5,10-methylene-5,6,7,8-tetrahydrofolate. 126-127 (RR) lines the dUMP pocket. Cys146 functions as the Nucleophile in the catalytic mechanism. DUMP-binding positions include 166 to 169 (RSVD), Asn177, and 207 to 209 (HLY). A (6R)-5,10-methylene-5,6,7,8-tetrahydrofolate-binding site is contributed by Asp169. Ala263 contacts (6R)-5,10-methylene-5,6,7,8-tetrahydrofolate.

Belongs to the thymidylate synthase family. Bacterial-type ThyA subfamily. As to quaternary structure, homodimer.

The protein resides in the cytoplasm. It carries out the reaction dUMP + (6R)-5,10-methylene-5,6,7,8-tetrahydrofolate = 7,8-dihydrofolate + dTMP. Its pathway is pyrimidine metabolism; dTTP biosynthesis. Functionally, catalyzes the reductive methylation of 2'-deoxyuridine-5'-monophosphate (dUMP) to 2'-deoxythymidine-5'-monophosphate (dTMP) while utilizing 5,10-methylenetetrahydrofolate (mTHF) as the methyl donor and reductant in the reaction, yielding dihydrofolate (DHF) as a by-product. This enzymatic reaction provides an intracellular de novo source of dTMP, an essential precursor for DNA biosynthesis. The chain is Thymidylate synthase from Geobacillus thermodenitrificans (strain NG80-2).